Here is a 365-residue protein sequence, read N- to C-terminus: MAEFVRAQIFGTTFEITSRYTDLQPVGMGAFGLVCSARDQLTGQPVAVKKIMKPFSTPVLSKRTYRELKLLKHLRHENIISLSDIFISPLEDIYFVTELLGTDLHRLLTSRPLEKQFIQYFLYQILRGLKYVHSAGVVHRDLKPSNILINENCDLKICDFGLARIQDPQMTGYVSTRYYRAPEIMLTWQKYDVEVDIWSTGCIFAEMLEGKPLFPGKDHVNQFSIITELLGTPPDDVIQTICSENTLRFVKSLPKRERQPLANKFKNADPDAVDLLERMLVFDPKKRIRATEALAHEYLSPYHDPTDEPEAEEKFDWSFNDADLPVDTWKIMMYSEILDFHNIDQGNDASQALAEGLGQGQQNFA.

Residues 20–299 (YTDLQPVGMG…ATEALAHEYL (280 aa)) form the Protein kinase domain. ATP is bound by residues 26–34 (VGMGAFGLV) and Lys-49. The active-site Proton acceptor is the Asp-141. Thr-171 carries the post-translational modification Phosphothreonine. The TXY signature appears at 171–173 (TGY). Residue Tyr-173 is modified to Phosphotyrosine.

The protein belongs to the protein kinase superfamily. Ser/Thr protein kinase family. MAP kinase subfamily. HOG1 sub-subfamily. Mg(2+) serves as cofactor. Post-translationally, dually phosphorylated on Thr-171 and Tyr-173, which activates the enzyme.

Its subcellular location is the cytoplasm. It localises to the nucleus. It carries out the reaction L-seryl-[protein] + ATP = O-phospho-L-seryl-[protein] + ADP + H(+). It catalyses the reaction L-threonyl-[protein] + ATP = O-phospho-L-threonyl-[protein] + ADP + H(+). With respect to regulation, activated by tyrosine and threonine phosphorylation. Its function is as follows. Proline-directed serine/threonine-protein kinase involved in a signal transduction pathway that is activated by changes in the osmolarity of the extracellular environment. Controls osmotic regulation of transcription of target genes. The chain is Mitogen-activated protein kinase hog1 (hog1) from Aspergillus clavatus (strain ATCC 1007 / CBS 513.65 / DSM 816 / NCTC 3887 / NRRL 1 / QM 1276 / 107).